The following is an 82-amino-acid chain: UPF0180 protein BH2667 (82 aa).

It belongs to the UPF0180 family.

This Halalkalibacterium halodurans (strain ATCC BAA-125 / DSM 18197 / FERM 7344 / JCM 9153 / C-125) (Bacillus halodurans) protein is UPF0180 protein BH2667.